The chain runs to 252 residues: Probable transcriptional regulatory protein Tmel_0985 (252 aa).

Belongs to the TACO1 family.

The protein localises to the cytoplasm. The protein is Probable transcriptional regulatory protein Tmel_0985 of Thermosipho melanesiensis (strain DSM 12029 / CIP 104789 / BI429).